The following is a 71-amino-acid chain: Small ribosomal subunit protein bS21 (71 aa).

Positions 39-71 are disordered; that stretch reads EKPTQERKRKAAAAVKRQLRRSSRDVTKRQRLY. Residues 45–59 show a composition bias toward basic residues; the sequence is RKRKAAAAVKRQLRR. Positions 60 to 71 are enriched in basic and acidic residues; the sequence is SSRDVTKRQRLY.

It belongs to the bacterial ribosomal protein bS21 family.

The chain is Small ribosomal subunit protein bS21 from Stenotrophomonas maltophilia (strain K279a).